The following is a 346-amino-acid chain: Beta-hexosaminidase (346 aa).

Residues D62, R70, R134, and K164–H165 each bind substrate. The active-site Proton donor/acceptor is H177. D249 serves as the catalytic Nucleophile.

Belongs to the glycosyl hydrolase 3 family. NagZ subfamily.

It localises to the cytoplasm. The enzyme catalyses Hydrolysis of terminal non-reducing N-acetyl-D-hexosamine residues in N-acetyl-beta-D-hexosaminides.. It functions in the pathway cell wall biogenesis; peptidoglycan recycling. In terms of biological role, plays a role in peptidoglycan recycling by cleaving the terminal beta-1,4-linked N-acetylglucosamine (GlcNAc) from peptide-linked peptidoglycan fragments, giving rise to free GlcNAc, anhydro-N-acetylmuramic acid and anhydro-N-acetylmuramic acid-linked peptides. The sequence is that of Beta-hexosaminidase from Actinobacillus succinogenes (strain ATCC 55618 / DSM 22257 / CCUG 43843 / 130Z).